The primary structure comprises 91 residues: Potassium channel toxin TdiKIK (91 aa).

The first 25 residues, 1–25, serve as a signal peptide directing secretion; the sequence is MVATNRCCVFALLVALLLIHSLAEA. A propeptide spanning residues 26–44 is cleaved from the precursor; that stretch reads GKGKEVLGKIKNKLVEVKE. Positions 58-91 constitute a BetaSPN-type CS-alpha/beta domain; that stretch reads EYACPVIDKFCEDHCAAKNAIGKCDDFKCQCLNS. Intrachain disulfides connect Cys61–Cys81, Cys68–Cys86, and Cys72–Cys88.

In terms of tissue distribution, expressed by the venom gland.

The protein resides in the secreted. The full peptide presents antibacterial and cytotoxic activities. The synthetic C-terminus (AA 33-76) inhibits voltage-gated potassium channels Kv1.1/KCNA1, Kv1.2/KCNA2, and Kv1.3/KCNA3. The polypeptide is Potassium channel toxin TdiKIK (Tityus discrepans (Venezuelan scorpion)).